A 351-amino-acid polypeptide reads, in one-letter code: Biotin synthase (351 aa).

A Radical SAM core domain is found at 58–285 (NTVQLSTLLS…RAMVRLSAGR (228 aa)). Cys73, Cys77, and Cys80 together coordinate [4Fe-4S] cluster. Positions 117, 148, 208, and 280 each coordinate [2Fe-2S] cluster.

This sequence belongs to the radical SAM superfamily. Biotin synthase family. In terms of assembly, homodimer. It depends on [4Fe-4S] cluster as a cofactor. Requires [2Fe-2S] cluster as cofactor.

It carries out the reaction (4R,5S)-dethiobiotin + (sulfur carrier)-SH + 2 reduced [2Fe-2S]-[ferredoxin] + 2 S-adenosyl-L-methionine = (sulfur carrier)-H + biotin + 2 5'-deoxyadenosine + 2 L-methionine + 2 oxidized [2Fe-2S]-[ferredoxin]. It functions in the pathway cofactor biosynthesis; biotin biosynthesis; biotin from 7,8-diaminononanoate: step 2/2. Its function is as follows. Catalyzes the conversion of dethiobiotin (DTB) to biotin by the insertion of a sulfur atom into dethiobiotin via a radical-based mechanism. The protein is Biotin synthase of Paraburkholderia phymatum (strain DSM 17167 / CIP 108236 / LMG 21445 / STM815) (Burkholderia phymatum).